The primary structure comprises 123 residues: UPF0102 protein mma_0204 (123 aa).

The protein belongs to the UPF0102 family.

This is UPF0102 protein mma_0204 from Janthinobacterium sp. (strain Marseille) (Minibacterium massiliensis).